Here is a 195-residue protein sequence, read N- to C-terminus: MPKLGMQSIRRRQLIDATLEAINEVGMHDATIAQIARRAGVSTGIISHYFRDKNGLLEATMRDITSQLRDAVLNRLHALPQGSAEQRLQAIVGGNFDETQVSSAAMKAWLAFWASSMHQPMLYRLQQVSSRRLLSNLVSEFRRELPRQQAQEAGYGLAALIDGLWLRAALSGKPLDKPLAHSLTRHFITQHLPTD.

Residues 8 to 68 (SIRRRQLIDA…ATMRDITSQL (61 aa)) enclose the HTH tetR-type domain. Residues 31–50 (TIAQIARRAGVSTGIISHYF) constitute a DNA-binding region (H-T-H motif).

It participates in amine and polyamine biosynthesis; betaine biosynthesis via choline pathway [regulation]. In terms of biological role, repressor involved in the biosynthesis of the osmoprotectant glycine betaine. It represses transcription of the choline transporter BetT and the genes of BetAB involved in the synthesis of glycine betaine. The sequence is that of HTH-type transcriptional regulator BetI from Shigella flexneri serotype 5b (strain 8401).